The primary structure comprises 63 residues: uncharacterized protein (63 aa).

This is an uncharacterized protein from Acidianus bottle-shaped virus (isolate Italy/Pozzuoli) (ABV).